A 294-amino-acid polypeptide reads, in one-letter code: Ribosomal protein L11 methyltransferase (294 aa).

The S-adenosyl-L-methionine site is built by T144, G165, D187, and N229.

This sequence belongs to the methyltransferase superfamily. PrmA family.

Its subcellular location is the cytoplasm. It carries out the reaction L-lysyl-[protein] + 3 S-adenosyl-L-methionine = N(6),N(6),N(6)-trimethyl-L-lysyl-[protein] + 3 S-adenosyl-L-homocysteine + 3 H(+). Functionally, methylates ribosomal protein L11. The protein is Ribosomal protein L11 methyltransferase of Pseudomonas aeruginosa (strain LESB58).